We begin with the raw amino-acid sequence, 670 residues long: Leucine-rich repeat-containing protein 45 (670 aa).

LRR repeat units follow at residues 87-108 (TVKS…ALGK), 115-136 (SIRS…FSFF), 145-166 (FLQR…ELAM), 173-194 (SLQE…ALLN), and 201-223 (TLKK…VEQA). Residues 234-645 (LSETQNRTSV…ISRMKEEEAQ (412 aa)) adopt a coiled-coil conformation.

Homomer.

The protein localises to the cytoplasm. It localises to the cytoskeleton. The protein resides in the microtubule organizing center. It is found in the centrosome. Its function is as follows. Component of the proteinaceous fiber-like linker between two centrioles, required for centrosome cohesion. The polypeptide is Leucine-rich repeat-containing protein 45 (LRRC45) (Gallus gallus (Chicken)).